Consider the following 514-residue polypeptide: Lysine--tRNA ligase (514 aa).

Glu-424 and Glu-431 together coordinate Mg(2+).

Belongs to the class-II aminoacyl-tRNA synthetase family. Homodimer. Mg(2+) is required as a cofactor.

The protein localises to the cytoplasm. It carries out the reaction tRNA(Lys) + L-lysine + ATP = L-lysyl-tRNA(Lys) + AMP + diphosphate. This chain is Lysine--tRNA ligase, found in Cupriavidus necator (strain ATCC 17699 / DSM 428 / KCTC 22496 / NCIMB 10442 / H16 / Stanier 337) (Ralstonia eutropha).